Here is a 217-residue protein sequence, read N- to C-terminus: DNA transformation protein TfoX (217 aa).

It belongs to the Sxy/TfoX family.

Required for DNA transformation. Positively regulates genes required for DNA transformation (late competence-specific genes) in association with CRP. Required for expression of the late competence-specific gene, com101A. Required for expression of the dprABC operon. This Haemophilus influenzae (strain ATCC 51907 / DSM 11121 / KW20 / Rd) protein is DNA transformation protein TfoX.